The sequence spans 332 residues: Ribosomal RNA small subunit methyltransferase C (332 aa).

It belongs to the methyltransferase superfamily. RsmC family. In terms of assembly, monomer.

It is found in the cytoplasm. It carries out the reaction guanosine(1207) in 16S rRNA + S-adenosyl-L-methionine = N(2)-methylguanosine(1207) in 16S rRNA + S-adenosyl-L-homocysteine + H(+). In terms of biological role, specifically methylates the guanine in position 1207 of 16S rRNA in the 30S particle. This Pseudomonas aeruginosa (strain LESB58) protein is Ribosomal RNA small subunit methyltransferase C.